The sequence spans 385 residues: Interleukin-13 receptor subunit alpha-2 (385 aa).

Residues 1-23 form the signal peptide; it reads MALMAVNTRCLCLFLLCTITGHS. At 24 to 336 the chain is on the extracellular side; sequence LEIKVNPPQD…WEGYTGPDSK (313 aa). Fibronectin type-III domains lie at 30-130, 133-221, and 236-334; these read PPQD…ADEG, GTKI…PIRS, and PPEF…TGPD. Cysteines 61 and 109 form a disulfide. A glycan (N-linked (GlcNAc...) asparagine) is linked at Asn111. A disulfide bond links Cys141 and Cys151. Asn164 carries an N-linked (GlcNAc...) asparagine glycan. Cys180 and Cys193 form a disulfide bridge. N-linked (GlcNAc...) asparagine glycans are attached at residues Asn211 and Asn295. Cys265 and Cys312 form a disulfide bridge. The WSXWS motif signature appears at 318 to 322; it reads WSEWS. The chain crosses the membrane as a helical span at residues 337–357; sequence IVFIVPVCLFFIFLLLLLCLI. Residues 358–385 lie on the Cytoplasmic side of the membrane; that stretch reads VEKEDPEPTLSLHVDLNKEMYAYEETLC.

The protein belongs to the type I cytokine receptor family. Type 5 subfamily. Interacts with IL4RA. Interacts with high affinity to interleukin-13 (IL13), but not to interleukin-4 (IL4). Post-translationally, cleaved by MMP8 leading to a soluble form that is also able to interact with IL13.

Its subcellular location is the cell membrane. Its function is as follows. Cell surface receptor that plays a role in the regulation of IL-13-mediated responses. Functions as a decoy receptor that inhibits IL-13- and IL-4-mediated signal transduction via the JAK-STAT pathway and thereby modulates immune responses and inflammation. Serves as a functional signaling receptor for IL-13 in an alternative pathway involving AP-1 ultimately leading to the production of TGFB1. This chain is Interleukin-13 receptor subunit alpha-2 (Il13ra2), found in Rattus norvegicus (Rat).